Consider the following 610-residue polypeptide: Alpha-fetoprotein (610 aa).

The first 18 residues, 1–18 (MKWVVSFFLLFLLNFSDS), serve as a signal peptide directing secretion. Albumin domains lie at 19-210 (RTMH…TSIT), 211-403 (KELR…EELE), and 404-602 (KYIQ…ALIS). Residue H22 coordinates Cu(2+). Intrachain disulfides connect C99/C114, C113/C124, C148/C193, C192/C201, C224/C270, C269/C277, C289/C303, and C302/C314. Phosphoserine is present on residues S111 and S115. N-linked (GlcNAc...) asparagine glycosylation is found at N197 and N251. A Phosphoserine modification is found at S345. 7 disulfide bridges follow: C385/C394, C417/C463, C462/C473, C486/C502, C501/C512, C539/C584, and C583/C592. S445 is modified (phosphoserine).

This sequence belongs to the ALB/AFP/VDB family. Dimeric and trimeric forms have been found in addition to the monomeric form. In terms of processing, sulfated. As to expression, plasma.

It localises to the secreted. Functionally, binds copper, nickel, and fatty acids as well as, and bilirubin less well than, serum albumin. This chain is Alpha-fetoprotein (AFP), found in Bos taurus (Bovine).